The sequence spans 269 residues: Putative biopolymer transport protein ExbD (269 aa).

Over 1–40 (MASSPKAPKSHRKFQSIYHPTRPLSLWQDNQHDQGEVRIE) the chain is Cytoplasmic. The helical transmembrane segment at 41 to 61 (IIPLIDVVFCILTFFILGAVG) threads the bilayer. The Periplasmic portion of the chain corresponds to 62-269 (LSRQQAISLD…GNTVPSAPQQ (208 aa)). The interval 190–269 (NGANPGMSNF…GNTVPSAPQQ (80 aa)) is disordered. The segment covering 193 to 204 (NPGMSNFNNSNP) has biased composition (low complexity).

This sequence belongs to the ExbD/TolR family.

Its subcellular location is the cell inner membrane. The chain is Putative biopolymer transport protein ExbD from Synechocystis sp. (strain ATCC 27184 / PCC 6803 / Kazusa).